The following is a 754-amino-acid chain: Peptidyl-prolyl cis-trans isomerase G (754 aa).

Residues 11 to 176 (FFDIAINNQP…AEVRILSCGE (166 aa)) form the PPIase cyclophilin-type domain. Over residues 182–193 (KVKKEEKKRHKS) the composition is skewed to basic residues. Residues 182 to 754 (KVKKEEKKRH…SPGTDEDKSG (573 aa)) are disordered. The span at 194 to 216 (SSSSSSSSSDSDSSSDSQSSSDS) shows a compositional bias: low complexity. A compositionally biased stretch (basic residues) spans 228–253 (KKRKKKHRKNSRKHKKEKKKRKKSKK). A phosphoserine mark is found at S254, S256, S257, S259, and S290. Residues 292–310 (PKADEKERKNREREREREC) are compositionally biased toward basic and acidic residues. S315 carries the post-translational modification Phosphoserine. Residues 329–347 (SGRKIKGRGPRRYRTPSRS) show a composition bias toward basic residues. 2 stretches are compositionally biased toward basic and acidic residues: residues 348–368 (RSRDRFRRSETPPHWRQEMQR) and 379–449 (RWIK…DKYK). The residue at position 356 (S356) is a Phosphoserine. Phosphothreonine is present on T358. Phosphoserine is present on S386. Residue K392 forms a Glycyl lysine isopeptide (Lys-Gly) (interchain with G-Cter in SUMO2) linkage. Phosphoserine occurs at positions 397, 413, and 415. The span at 450–462 (NKVKKRAKSKSRS) shows a compositional bias: basic residues. Composition is skewed to basic and acidic residues over residues 463–553 (KSKE…DITK) and 578–599 (RTHDRDRSRSKEYHRYREQEYR). A compositionally biased stretch (basic residues) spans 616–627 (SRSKDRRRRRRD). Positions 628–686 (SRSSEREESQSRNKDKYRNQESKSSHRKENSESEKRMYSKSRDHNSSNNSREKKADRDQ) are enriched in basic and acidic residues. S687 and S690 each carry phosphoserine. The segment covering 687–698 (SPFSKIKQSSQD) has biased composition (polar residues). K693 is covalently cross-linked (Glycyl lysine isopeptide (Lys-Gly) (interchain with G-Cter in SUMO2)). 3 positions are modified to phosphoserine: S696, S744, and S745. Residues 707 to 754 (KNKEDEKIRSSVEKENQKSKGQENDHVHEKNKKFDHESSPGTDEDKSG) show a composition bias toward basic and acidic residues. T748 bears the Phosphothreonine mark. At S753 the chain carries Phosphoserine.

In terms of assembly, interacts with CLK1, PNN and with the phosphorylated C-terminal domain of RNA polymerase II. Ubiquitous.

The protein localises to the nucleus matrix. It localises to the nucleus speckle. The catalysed reaction is [protein]-peptidylproline (omega=180) = [protein]-peptidylproline (omega=0). Its activity is regulated as follows. Inhibited by cyclosporin A (CsA). Functionally, PPIase that catalyzes the cis-trans isomerization of proline imidic peptide bonds in oligopeptides and may therefore assist protein folding. May be implicated in the folding, transport, and assembly of proteins. May play an important role in the regulation of pre-mRNA splicing. The sequence is that of Peptidyl-prolyl cis-trans isomerase G (PPIG) from Homo sapiens (Human).